The primary structure comprises 415 residues: Serine hydroxymethyltransferase 1 (415 aa).

Residues leucine 122 and 126–128 (GHL) contribute to the (6S)-5,6,7,8-tetrahydrofolate site. Lysine 230 is modified (N6-(pyridoxal phosphate)lysine).

The protein belongs to the SHMT family. As to quaternary structure, homodimer. Requires pyridoxal 5'-phosphate as cofactor.

It localises to the cytoplasm. It carries out the reaction (6R)-5,10-methylene-5,6,7,8-tetrahydrofolate + glycine + H2O = (6S)-5,6,7,8-tetrahydrofolate + L-serine. The protein operates within one-carbon metabolism; tetrahydrofolate interconversion. It functions in the pathway amino-acid biosynthesis; glycine biosynthesis; glycine from L-serine: step 1/1. In terms of biological role, catalyzes the reversible interconversion of serine and glycine with tetrahydrofolate (THF) serving as the one-carbon carrier. This reaction serves as the major source of one-carbon groups required for the biosynthesis of purines, thymidylate, methionine, and other important biomolecules. Also exhibits THF-independent aldolase activity toward beta-hydroxyamino acids, producing glycine and aldehydes, via a retro-aldol mechanism. This is Serine hydroxymethyltransferase 1 from Burkholderia mallei (strain ATCC 23344).